The primary structure comprises 275 residues: Light-independent protochlorophyllide reductase iron-sulfur ATP-binding protein (275 aa).

Residues 10 to 15 (GIGKST) and Lys-39 each bind ATP. Ser-14 contacts Mg(2+). The [4Fe-4S] cluster site is built by Cys-95 and Cys-129. 180-181 (NR) serves as a coordination point for ATP.

This sequence belongs to the NifH/BchL/ChlL family. In terms of assembly, homodimer. Protochlorophyllide reductase is composed of three subunits; ChlL, ChlN and ChlB. [4Fe-4S] cluster serves as cofactor.

The catalysed reaction is chlorophyllide a + oxidized 2[4Fe-4S]-[ferredoxin] + 2 ADP + 2 phosphate = protochlorophyllide a + reduced 2[4Fe-4S]-[ferredoxin] + 2 ATP + 2 H2O. It participates in porphyrin-containing compound metabolism; chlorophyll biosynthesis (light-independent). Component of the dark-operative protochlorophyllide reductase (DPOR) that uses Mg-ATP and reduced ferredoxin to reduce ring D of protochlorophyllide (Pchlide) to form chlorophyllide a (Chlide). This reaction is light-independent. The L component serves as a unique electron donor to the NB-component of the complex, and binds Mg-ATP. The chain is Light-independent protochlorophyllide reductase iron-sulfur ATP-binding protein from Gloeobacter violaceus (strain ATCC 29082 / PCC 7421).